The primary structure comprises 69 residues: Putative membrane protein insertion efficiency factor (69 aa).

The protein belongs to the UPF0161 family.

It is found in the cell membrane. Functionally, could be involved in insertion of integral membrane proteins into the membrane. The protein is Putative membrane protein insertion efficiency factor of Clostridium beijerinckii (strain ATCC 51743 / NCIMB 8052) (Clostridium acetobutylicum).